We begin with the raw amino-acid sequence, 311 residues long: Non-homologous end joining protein Ku (311 aa).

In terms of domain architecture, Ku spans isoleucine 26–alanine 210. The disordered stretch occupies residues alanine 269 to serine 311. Residues proline 282 to lysine 293 show a composition bias toward low complexity. Residues lysine 301–serine 311 are compositionally biased toward basic residues.

Belongs to the prokaryotic Ku family. In terms of assembly, homodimer. Interacts with LigD.

It localises to the spore core. Its function is as follows. With LigD forms a non-homologous end joining (NHEJ) DNA repair enzyme, which repairs dsDNA breaks with reduced fidelity. Binds linear dsDNA with 5'- and 3'- overhangs but not closed circular dsDNA nor ssDNA. Recruits and stimulates the ligase activity of LigD. Probably involved in DNA repair during spore germination. The chain is Non-homologous end joining protein Ku from Bacillus subtilis (strain 168).